A 167-amino-acid chain; its full sequence is uncharacterized protein (167 aa).

Positions 148–167 are disordered; that stretch reads NKESRGENDGGEERESANIY.

This is an uncharacterized protein from Homo sapiens (Human).